The following is a 125-amino-acid chain: MLKEFKEFISRGNVMDLAVGVIIGGAFTAIVNSLVKYIINPFLGLFVGAIDFSDLVFKIGNATFRVGSFLNAVINFLIIAFVVFLMVKGINKVLRQDKKEEAPAPKDPQLEVLEEIRDSLKKLDK.

The next 3 helical transmembrane spans lie at 19–39 (VGVIIGGAFTAIVNSLVKYII), 42–62 (FLGLFVGAIDFSDLVFKIGNA), and 66–86 (VGSFLNAVINFLIIAFVVFLM).

Belongs to the MscL family. In terms of assembly, homopentamer.

It is found in the cell membrane. Channel that opens in response to stretch forces in the membrane lipid bilayer. May participate in the regulation of osmotic pressure changes within the cell. This Ligilactobacillus salivarius (strain UCC118) (Lactobacillus salivarius) protein is Large-conductance mechanosensitive channel.